A 273-amino-acid chain; its full sequence is Chondrolectin (273 aa).

Positions 1–21 are cleaved as a signal peptide; sequence MIRIASLLLGAALLCAQGAFA. Topologically, residues 22 to 216 are extracellular; that stretch reads RRVVSGQKVC…VVTEAGIIPN (195 aa). The C-type lectin domain occupies 35–179; that stretch reads VKHPCYKMAY…CNMKHNYICK (145 aa). Intrachain disulfides connect Cys-61–Cys-178 and Cys-144–Cys-170. Asn-86 is a glycosylation site (N-linked (GlcNAc...) asparagine). Residues 217-237 traverse the membrane as a helical segment; that stretch reads LIYVIIPTIPLLLLILVALGT. At 238–273 the chain is on the cytoplasmic side; sequence CCFQMLHKSKGRSKTSPNQSTLWISKSTRKESGMEV. A disordered region spans residues 247–273; sequence KGRSKTSPNQSTLWISKSTRKESGMEV. Residues 251-263 are compositionally biased toward polar residues; that stretch reads KTSPNQSTLWISK.

As to quaternary structure, interacts with RABGGTB. In terms of tissue distribution, in adult mice preferentially expressed in skeletal muscle, testis, brain, and lung. Expressed in striated muscle (at protein level). Expressed in spinal cord. Detected in spinal cord fast motor neurons (at protein level).

The protein resides in the membrane. May play a role in the development of the nervous system such as in neurite outgrowth and elongation. May be involved in motor axon growth and guidance. The polypeptide is Chondrolectin (Chodl) (Mus musculus (Mouse)).